The primary structure comprises 334 residues: Cyclin N-terminal domain-containing protein 1 (334 aa).

Residues 29–180 enclose the Cyclin N-terminal domain; it reads NALLHLAQQN…ILKSLNFQIN (152 aa).

Interacts with PRR19; this interaction promotes crossover formation. Interacts with RFC3 and RFC4; these interactions facilitate crossover formation. Interacts with CDC34; this interaction regulates the cell-cycle progression. Isoform 2 is expressed in spermatocyte.

The protein localises to the nucleus. Its subcellular location is the cytoplasm. The protein resides in the chromosome. Its function is as follows. Plays a role in the different steps of crossover formation during meiotic recombination. Participates in the crossover differentiation step of crossover-specific recombination intermediates through its interaction with PRR19. In addition, stimulates crossover formation through the interactions with RFC3 and RFC4 and simultaneously regulates cell-cycle progression through interactions with CDC34 and subsequent ubiquitination of WEE1. May also participates in an active deselection process that destabilizes or removes excess pre-CO intermediates. The chain is Cyclin N-terminal domain-containing protein 1 from Mus musculus (Mouse).